Consider the following 259-residue polypeptide: Virulence plasmid ParA family protein pGP5-D (259 aa).

Position 9 to 16 (9 to 16 (FKGGTGKT)) interacts with ATP.

The protein belongs to the ParA family.

The sequence is that of Virulence plasmid ParA family protein pGP5-D from Chlamydia psittaci (Chlamydophila psittaci).